We begin with the raw amino-acid sequence, 442 residues long: MSKTYHFIGIKGSGMSALALMLHQMGHMVQGSDVEKYYFTQRGLEQAGITILPFSEDNITPDMELIVGNAFRENNKEVAYALRHQIPFKRYHDFLGDFMKSFISFAVAGAHGKTSTTGLLSHVLKNITDTSYLIGDGTGRGSANAQYFVFESDEYERHFMPYHPEYSIITNIDFDHPDYFTGIADVRNAFNDYAKQVKKALFVYGEDDELKKIEAPAPIYYYGFEEGNDFIAYDITRTTNGSDFKVKHQGEVIGQFHVPAYGKHNILNATAVIANLFVAGIDMALVADHLKTFSGVKRRFTEKIINDTIIIDDFAHHPTEIVATIDAARQKYPSKEIVAIFQPHTFTRTIALLEDFACALNEADSVYLAQIYGSAREVDKGEVKVEDLAAKIIKPSQVVTVENVSPLLDHDNAVYVFMGAGDIQLYEHSFEELLANLTKNNQ.

109-115 (GAHGKTS) provides a ligand contact to ATP.

It belongs to the MurCDEF family.

The protein resides in the cytoplasm. The catalysed reaction is UDP-N-acetyl-alpha-D-muramate + L-alanine + ATP = UDP-N-acetyl-alpha-D-muramoyl-L-alanine + ADP + phosphate + H(+). The protein operates within cell wall biogenesis; peptidoglycan biosynthesis. Cell wall formation. The polypeptide is UDP-N-acetylmuramate--L-alanine ligase (Streptococcus pyogenes serotype M6 (strain ATCC BAA-946 / MGAS10394)).